The following is a 348-amino-acid chain: High mobility group protein 20A (348 aa).

Disordered regions lie at residues M1 to F114 and S181 to E213. 2 stretches are compositionally biased toward polar residues: residues S34–N47 and S56–N71. A compositionally biased stretch (basic and acidic residues) spans T72 to R82. The segment covering T83–P97 has biased composition (basic residues). A DNA-binding region (HMG box) is located at residues P104–Q172. Residues K183–E213 are compositionally biased toward basic and acidic residues. Positions S230–Q274 form a coiled coil.

It localises to the nucleus. Plays a role in neuronal differentiation. The sequence is that of High mobility group protein 20A (HMG20A) from Gallus gallus (Chicken).